Reading from the N-terminus, the 429-residue chain is Ribosomal RNA small subunit methyltransferase B (429 aa).

S-adenosyl-L-methionine-binding positions include 254-260 (CAAPGGK), D277, D303, and D322. C375 (nucleophile) is an active-site residue. Residues 397 to 419 (ALSETGTPDQPGQQNLPGGEEGD) form a disordered region. The span at 400–412 (ETGTPDQPGQQNL) shows a compositional bias: polar residues.

Belongs to the class I-like SAM-binding methyltransferase superfamily. RsmB/NOP family.

The protein resides in the cytoplasm. It carries out the reaction cytidine(967) in 16S rRNA + S-adenosyl-L-methionine = 5-methylcytidine(967) in 16S rRNA + S-adenosyl-L-homocysteine + H(+). Its function is as follows. Specifically methylates the cytosine at position 967 (m5C967) of 16S rRNA. The sequence is that of Ribosomal RNA small subunit methyltransferase B from Salmonella choleraesuis (strain SC-B67).